A 202-amino-acid polypeptide reads, in one-letter code: Proteasome subunit beta 1 (202 aa).

Residues 1 to 8 (MGEVVLPG) constitute a propeptide, removed in mature form; by autocatalysis. Threonine 9 (nucleophile) is an active-site residue.

The protein belongs to the peptidase T1B family. The 20S proteasome core is composed of 14 alpha and 14 beta subunits that assemble into four stacked heptameric rings, resulting in a barrel-shaped structure. The two inner rings, each composed of seven catalytic beta subunits, are sandwiched by two outer rings, each composed of seven alpha subunits. The catalytic chamber with the active sites is on the inside of the barrel. Has a gated structure, the ends of the cylinder being occluded by the N-termini of the alpha-subunits. Is capped at one or both ends by the proteasome regulatory ATPase, PAN.

Its subcellular location is the cytoplasm. It carries out the reaction Cleavage of peptide bonds with very broad specificity.. With respect to regulation, the formation of the proteasomal ATPase PAN-20S proteasome complex, via the docking of the C-termini of PAN into the intersubunit pockets in the alpha-rings, triggers opening of the gate for substrate entry. Interconversion between the open-gate and close-gate conformations leads to a dynamic regulation of the 20S proteasome proteolysis activity. In terms of biological role, component of the proteasome core, a large protease complex with broad specificity involved in protein degradation. This is Proteasome subunit beta 1 from Desulfurococcus amylolyticus (strain DSM 18924 / JCM 16383 / VKM B-2413 / 1221n) (Desulfurococcus kamchatkensis).